A 192-amino-acid polypeptide reads, in one-letter code: Ion-translocating oxidoreductase complex subunit A (192 aa).

Helical transmembrane passes span 5–25 (FLLF…FLGL), 39–59 (VGMS…SYIV), 63–83 (ILLP…VIAV), 102–122 (LLGI…LALL), 134–154 (IIYG…FSSM), and 171–191 (SIAM…TGLI).

It belongs to the NqrDE/RnfAE family. In terms of assembly, the complex is composed of six subunits: RnfA, RnfB, RnfC, RnfD, RnfE and RnfG.

The protein resides in the cell inner membrane. Part of a membrane-bound complex that couples electron transfer with translocation of ions across the membrane. This is Ion-translocating oxidoreductase complex subunit A from Psychromonas ingrahamii (strain DSM 17664 / CCUG 51855 / 37).